Reading from the N-terminus, the 177-residue chain is Large ribosomal subunit protein uL6 (177 aa).

Belongs to the universal ribosomal protein uL6 family. Part of the 50S ribosomal subunit.

In terms of biological role, this protein binds to the 23S rRNA, and is important in its secondary structure. It is located near the subunit interface in the base of the L7/L12 stalk, and near the tRNA binding site of the peptidyltransferase center. This Delftia acidovorans (strain DSM 14801 / SPH-1) protein is Large ribosomal subunit protein uL6.